The primary structure comprises 233 residues: Esterase FUS5 (233 aa).

Residues Ser105, Asp159, and His187 each act as charge relay system in the active site.

This sequence belongs to the LovG family.

Its function is as follows. Esterase; part of the gene cluster that mediates the biosynthesis of the mycotoxin fusarin C. Within the cluster, FUS1, FUS2, FUS8 and FUS9 are sufficient for fusarin production. The other FUS cluster members are not essential for fusarin C biosynthesis. The chain is Esterase FUS5 from Gibberella fujikuroi (strain CBS 195.34 / IMI 58289 / NRRL A-6831) (Bakanae and foot rot disease fungus).